Consider the following 459-residue polypeptide: Putrescine aminotransferase (459 aa).

Pyridoxal 5'-phosphate is bound by residues 150 to 151 (GT) and Gln274. Lys300 is subject to N6-(pyridoxal phosphate)lysine. Pyridoxal 5'-phosphate is bound at residue Thr332.

The protein belongs to the class-III pyridoxal-phosphate-dependent aminotransferase family. Putrescine aminotransferase subfamily. Pyridoxal 5'-phosphate serves as cofactor.

The catalysed reaction is an alkane-alpha,omega-diamine + 2-oxoglutarate = an omega-aminoaldehyde + L-glutamate. It carries out the reaction putrescine + 2-oxoglutarate = 1-pyrroline + L-glutamate + H2O. The enzyme catalyses cadaverine + 2-oxoglutarate = 5-aminopentanal + L-glutamate. It functions in the pathway amine and polyamine degradation; putrescine degradation; 4-aminobutanal from putrescine (transaminase route): step 1/1. Catalyzes the aminotransferase reaction from putrescine to 2-oxoglutarate, leading to glutamate and 4-aminobutanal, which spontaneously cyclizes to form 1-pyrroline. This is the first step in one of two pathways for putrescine degradation, where putrescine is converted into 4-aminobutanoate (gamma-aminobutyrate or GABA) via 4-aminobutanal. Also functions as a cadaverine transaminase in a a L-lysine degradation pathway to succinate that proceeds via cadaverine, glutarate and L-2-hydroxyglutarate. The chain is Putrescine aminotransferase from Escherichia coli O6:K15:H31 (strain 536 / UPEC).